The primary structure comprises 494 residues: Protein DETOXIFICATION 22 (494 aa).

The next 12 membrane-spanning stretches (helical) occupy residues 40–60, 78–98, 123–143, 159–179, 188–208, 217–237, 268–288, 299–319, 340–360, 384–404, 416–436, and 441–461; these read LWVV…VSLV, ITFT…ASAL, IVLT…GPIL, IALW…CQIF, IIAY…WLLV, GAMT…LLYV, GGMV…TGNL, AICI…LAAV, IVAV…FLFL, LLAF…VAVG, LACY…VVGL, and VWIG…IMTL.

This sequence belongs to the multi antimicrobial extrusion (MATE) (TC 2.A.66.1) family.

The protein resides in the membrane. This is Protein DETOXIFICATION 22 from Arabidopsis thaliana (Mouse-ear cress).